We begin with the raw amino-acid sequence, 151 residues long: uncharacterized protein (151 aa).

In terms of domain architecture, Nudix hydrolase spans 6–143 (MKTLSAGIIF…QWQYVMGPSL (138 aa)).

This is an uncharacterized protein from Escherichia coli (Bacteriophage T4).